The chain runs to 118 residues: V-type proton ATPase subunit G 2 (118 aa).

A coiled-coil region spans residues 8-57; it reads IQQLLQAEKRAAEKVADARKRKARRLKQAKEEAQMEVDQYRREREQEFQS. The interval 25-90 is disordered; the sequence is ARKRKARRLK…VQGMQSSQQR (66 aa). Residues 35 to 55 show a composition bias toward basic and acidic residues; sequence QAKEEAQMEVDQYRREREQEF. Composition is skewed to polar residues over residues 56-69 and 78-89; these read QSKQQAAMGSQGNL and RRQVQGMQSSQQ.

This sequence belongs to the V-ATPase G subunit family. V-ATPase is a heteromultimeric enzyme made up of two complexes: the ATP-hydrolytic V1 complex and the proton translocation V0 complex. The V1 complex consists of three catalytic AB heterodimers that form a heterohexamer, three peripheral stalks each consisting of EG heterodimers, one central rotor including subunits D and F, and the regulatory subunits C and H. The proton translocation complex V0 consists of the proton transport subunit a, a ring of proteolipid subunits c9c'', rotary subunit d, subunits e and f, and the accessory subunits ATP6AP1/Ac45 and ATP6AP2/PRR. Expressed in brain (at protein level).

It localises to the melanosome. Its subcellular location is the cytoplasmic vesicle. The protein resides in the clathrin-coated vesicle membrane. Subunit of the V1 complex of vacuolar(H+)-ATPase (V-ATPase), a multisubunit enzyme composed of a peripheral complex (V1) that hydrolyzes ATP and a membrane integral complex (V0) that translocates protons. V-ATPase is responsible for acidifying and maintaining the pH of intracellular compartments and in some cell types, is targeted to the plasma membrane, where it is responsible for acidifying the extracellular environment. This is V-type proton ATPase subunit G 2 from Bos taurus (Bovine).